Consider the following 613-residue polypeptide: Probable LRR receptor-like serine/threonine-protein kinase At5g10290 (613 aa).

A signal peptide spans 1–31 (MRMFSLQKMAMAFTLLFFACLCSFVSPDAQG). Over 32-225 (DALFALRISL…SGDSSKPKTG (194 aa)) the chain is Extracellular. 2 N-linked (GlcNAc...) asparagine glycosylation sites follow: Asn-81 and Asn-116. 4 LRR repeats span residues 95-117 (NLKTLTLKGNGITGEIPEDFGNL), 119-141 (SLTSLDLEDNQLTGRIPSTIGNL), 143-166 (KLQFLTLSRNKLNGTIPESLTGLP), and 167-189 (NLLNLLLDSNSLSGQIPQSLFEI). N-linked (GlcNAc...) asparagine glycosylation occurs at Asn-155. N-linked (GlcNAc...) asparagine glycosylation is present at Asn-193. The chain crosses the membrane as a helical span at residues 226-246 (IIAGVVAGVTVVLFGILLFLF). The Cytoplasmic portion of the chain corresponds to 247–613 (CKDRHKGYRR…QDAIELSGGR (367 aa)). Thr-287 is subject to Phosphothreonine. The Protein kinase domain occupies 290-569 (FSEKNVLGQG…VVRMLEGEGL (280 aa)). 296-304 (LGQGGFGKV) contributes to the ATP binding site. Position 313 is a phosphothreonine (Thr-313). Lys-318 is a binding site for ATP. Residue Ser-371 is modified to Phosphoserine. Thr-390 carries the phosphothreonine modification. Asp-417 serves as the catalytic Proton acceptor. 3 positions are modified to phosphothreonine: Thr-450, Thr-451, and Thr-456. Position 464 is a phosphotyrosine (Tyr-464). A Phosphoserine modification is found at Ser-466. Thr-467 carries the post-translational modification Phosphothreonine. Ser-471 is modified (phosphoserine). Thr-547 is modified (phosphothreonine).

It belongs to the protein kinase superfamily. Ser/Thr protein kinase family.

The protein localises to the cell membrane. The enzyme catalyses L-seryl-[protein] + ATP = O-phospho-L-seryl-[protein] + ADP + H(+). The catalysed reaction is L-threonyl-[protein] + ATP = O-phospho-L-threonyl-[protein] + ADP + H(+). The protein is Probable LRR receptor-like serine/threonine-protein kinase At5g10290 of Arabidopsis thaliana (Mouse-ear cress).